A 400-amino-acid polypeptide reads, in one-letter code: MAAGGLSRSERKAAERVRRLREEQQRERLRQVSRILRKAAAERSAEEGRLLAESADLVTELQGRSRRREGLKRRQEEVCDDPEELRGKVRELASAVRNAKYLVVYTGAGISTAASIPDYRGPNGVWTLLQKGRSVSAADLSEAEPTLTHMSITRLHEQKLVQHVVSQNCDGLHLRSGLPRTAISELHGNMYIEVCTSCVPNREYVRVFDVTERTALHRHQTGRTCHKCGTQLRDTIVHFGERGTLGQPLNWEAATEAASRADTILCLGSSLKVLKKYPRLWCMTKPPSRRPKLYIVNLQWTPKDDWAALKLHGKCDDVMRLLMAELGLEIPAYSRWQDPIFSLATPLRAGEEGSHSRKSLCRSREEAPPGDRGAPLSSAPILGGWFGRGCTKRTKRKKVT.

The interval 1 to 27 (MAAGGLSRSERKAAERVRRLREEQQRE) is disordered. Over residues 8–27 (RSERKAAERVRRLREEQQRE) the composition is skewed to basic and acidic residues. Positions 82–329 (PEELRGKVRE…RLLMAELGLE (248 aa)) constitute a Deacetylase sirtuin-type domain. NAD(+) is bound by residues 107–126 (GAGI…NGVW) and 167–170 (QNCD). His-187 serves as the catalytic Proton acceptor. Zn(2+)-binding residues include Cys-195, Cys-198, Cys-225, and Cys-228. Residues 268–270 (GSS), 297–299 (NLQ), and Cys-315 each bind NAD(+). Positions 354–380 (SHSRKSLCRSREEAPPGDRGAPLSSAP) are disordered. An Asymmetric dimethylarginine; alternate modification is found at Arg-388. Arg-388 is modified (omega-N-methylarginine; alternate).

This sequence belongs to the sirtuin family. Class IV subfamily. As to quaternary structure, interacts with UBTF and the RNA polymerase I complex. Interacts with components of the B-WICH complex, such as MYBBP1A, SMARCA5/SNF2H and BAZ1B/WSTF. Interacts with ELK4, leading to stabilization at target promoters for H3K18Ac deacetylation. Interacts with histone H2A and/or histone H2B. Interacts with DNMT1. Interacts with SIRT1. It depends on Zn(2+) as a cofactor. In terms of processing, phosphorylated during mitosis. Post-translationally, methylation at Arg-388 by PRMT6 inhibits the H3K18Ac histone deacetylase activity, promoting mitochondria biogenesis and maintaining mitochondria respiration. Ubiquitinated via 'Lys-63'-linked ubiquitin chains. Deubiquitinated by USP7, inhibiting the H3K18Ac histone deacetylase activity and regulating gluconeogenesis. Ubiquitinated by E3 ubiquitin-protein ligase complex containing FBXO7; leading to proteasomal degradation.

It localises to the nucleus. The protein resides in the nucleolus. The protein localises to the nucleoplasm. Its subcellular location is the chromosome. It is found in the cytoplasm. The catalysed reaction is N(6)-acetyl-L-lysyl-[protein] + NAD(+) + H2O = 2''-O-acetyl-ADP-D-ribose + nicotinamide + L-lysyl-[protein]. It catalyses the reaction N(6)-glutaryl-L-lysyl-[protein] + NAD(+) + H2O = 2''-O-glutaryl-ADP-D-ribose + nicotinamide + L-lysyl-[protein]. The enzyme catalyses N(6)-succinyl-L-lysyl-[protein] + NAD(+) + H2O = 2''-O-succinyl-ADP-D-ribose + nicotinamide + L-lysyl-[protein]. It carries out the reaction N(6)-propanoyl-L-lysyl-[protein] + NAD(+) + H2O = 3''-O-propanoyl-ADP-D-ribose + nicotinamide + L-lysyl-[protein]. The catalysed reaction is N(6)-decanoyl-L-lysyl-[protein] + NAD(+) + H2O = 2''-O-decanoyl-ADP-D-ribose + nicotinamide + L-lysyl-[protein]. NAD-dependent protein-lysine deacetylase and deacylase activities are activated by nucleic acids. Histone deacetylase activity is activated by DNA and nucleosomes. Protein-lysine deacylase activity is activated by RNA. H3K18Ac histone deacetylase activity is inhibited by methylation at Arg-388. H3K18Ac histone deacetylase activity is inhibited by deubiquitination by USP7. NAD-dependent protein-lysine deacylase that can act both as a deacetylase or deacylase (desuccinylase, depropionylase, deglutarylase and dedecanoylase), depending on the context. Specifically mediates deacetylation of histone H3 at 'Lys-18' (H3K18Ac). In contrast to other histone deacetylases, displays strong preference for a specific histone mark, H3K18Ac, directly linked to control of gene expression. H3K18Ac is mainly present around the transcription start site of genes and has been linked to activation of nuclear hormone receptors; SIRT7 thereby acts as a transcription repressor. Moreover, H3K18 hypoacetylation has been reported as a marker of malignancy in various cancers and seems to maintain the transformed phenotype of cancer cells. Also able to mediate deacetylation of histone H3 at 'Lys-36' (H3K36Ac) in the context of nucleosomes. Also mediates deacetylation of non-histone proteins, such as ATM, CDK9, DDX21, DDB1, FBL, FKBP5/FKBP51, GABPB1, RAN, RRP9/U3-55K and POLR1E/PAF53. Enriched in nucleolus where it stimulates transcription activity of the RNA polymerase I complex. Acts by mediating the deacetylation of the RNA polymerase I subunit POLR1E/PAF53, thereby promoting the association of RNA polymerase I with the rDNA promoter region and coding region. In response to metabolic stress, SIRT7 is released from nucleoli leading to hyperacetylation of POLR1E/PAF53 and decreased RNA polymerase I transcription. Required to restore the transcription of ribosomal RNA (rRNA) at the exit from mitosis. Promotes pre-ribosomal RNA (pre-rRNA) cleavage at the 5'-terminal processing site by mediating deacetylation of RRP9/U3-55K, a core subunit of the U3 snoRNP complex. Mediates 'Lys-37' deacetylation of Ran, thereby regulating the nuclear export of NF-kappa-B subunit RELA/p65. Acts as a regulator of DNA damage repair by mediating deacetylation of ATM during the late stages of DNA damage response, promoting ATM dephosphorylation and deactivation. Suppresses the activity of the DCX (DDB1-CUL4-X-box) E3 ubiquitin-protein ligase complexes by mediating deacetylation of DDB1, which prevents the interaction between DDB1 and CUL4 (CUL4A or CUL4B). Activates RNA polymerase II transcription by mediating deacetylation of CDK9, thereby promoting 'Ser-2' phosphorylation of the C-terminal domain (CTD) of RNA polymerase II. Deacetylates FBL, promoting histone-glutamine methyltransferase activity of FBL. Acts as a regulator of mitochondrial function by catalyzing deacetylation of GABPB1. Regulates Akt/AKT1 activity by mediating deacetylation of FKBP5/FKBP51. Required to prevent R-loop-associated DNA damage and transcription-associated genomic instability by mediating deacetylation and subsequent activation of DDX21, thereby overcoming R-loop-mediated stalling of RNA polymerases. In addition to protein deacetylase activity, also acts as a protein-lysine deacylase. Acts as a protein depropionylase by mediating depropionylation of Osterix (SP7), thereby regulating bone formation by osteoblasts. Acts as a histone deglutarylase by mediating deglutarylation of histone H4 on 'Lys-91' (H4K91glu); a mark that destabilizes nucleosomes by promoting dissociation of the H2A-H2B dimers from nucleosomes. Acts as a histone desuccinylase: in response to DNA damage, recruited to DNA double-strand breaks (DSBs) and catalyzes desuccinylation of histone H3 on 'Lys-122' (H3K122succ), thereby promoting chromatin condensation and DSB repair. Also promotes DSB repair by promoting H3K18Ac deacetylation, regulating non-homologous end joining (NHEJ). Along with its role in DNA repair, required for chromosome synapsis during prophase I of female meiosis by catalyzing H3K18Ac deacetylation. Involved in transcriptional repression of LINE-1 retrotransposon via H3K18Ac deacetylation, and promotes their association with the nuclear lamina. Required to stabilize ribosomal DNA (rDNA) heterochromatin and prevent cellular senescence induced by rDNA instability. Acts as a negative regulator of SIRT1 by preventing autodeacetylation of SIRT1, restricting SIRT1 deacetylase activity. The polypeptide is NAD-dependent protein deacetylase sirtuin-7 (Homo sapiens (Human)).